The primary structure comprises 122 residues: uncharacterized protein (122 aa).

This is an uncharacterized protein from Mycoplasma pneumoniae (strain ATCC 29342 / M129 / Subtype 1) (Mycoplasmoides pneumoniae).